The chain runs to 294 residues: uncharacterized protein (294 aa).

The interval 181 to 204 (DEPFPTTKNHNNDKRETNDKDDQQ) is disordered. The span at 190–204 (HNNDKRETNDKDDQQ) shows a compositional bias: basic and acidic residues.

The protein belongs to the IIV-6 391R family.

This is an uncharacterized protein from Acheta domesticus (House cricket).